A 252-amino-acid chain; its full sequence is Chitooligosaccharide deacetylase (252 aa).

Positions 61 and 125 each coordinate Mg(2+).

It belongs to the YdjC deacetylase family. ChbG subfamily. Homodimer. Requires Mg(2+) as cofactor.

It is found in the cytoplasm. It catalyses the reaction N,N'-diacetylchitobiose + H2O = N-acetyl-beta-D-glucosaminyl-(1-&gt;4)-D-glucosamine + acetate. The catalysed reaction is diacetylchitobiose-6'-phosphate + H2O = N'-monoacetylchitobiose-6'-phosphate + acetate. It functions in the pathway glycan degradation; chitin degradation. Its function is as follows. Involved in the degradation of chitin. ChbG is essential for growth on the acetylated chitooligosaccharides chitobiose and chitotriose but is dispensable for growth on cellobiose and chitosan dimer, the deacetylated form of chitobiose. Deacetylation of chitobiose-6-P and chitotriose-6-P is necessary for both the activation of the chb promoter by the regulatory protein ChbR and the hydrolysis of phosphorylated beta-glucosides by the phospho-beta-glucosidase ChbF. Catalyzes the removal of only one acetyl group from chitobiose-6-P to yield monoacetylchitobiose-6-P, the inducer of ChbR and the substrate of ChbF. The polypeptide is Chitooligosaccharide deacetylase (Citrobacter koseri (strain ATCC BAA-895 / CDC 4225-83 / SGSC4696)).